The sequence spans 303 residues: Porphobilinogen deaminase (303 aa).

Cysteine 240 is modified (S-(dipyrrolylmethanemethyl)cysteine).

The protein belongs to the HMBS family. In terms of assembly, monomer. Requires dipyrromethane as cofactor.

It catalyses the reaction 4 porphobilinogen + H2O = hydroxymethylbilane + 4 NH4(+). It functions in the pathway porphyrin-containing compound metabolism; protoporphyrin-IX biosynthesis; coproporphyrinogen-III from 5-aminolevulinate: step 2/4. Its function is as follows. Tetrapolymerization of the monopyrrole PBG into the hydroxymethylbilane pre-uroporphyrinogen in several discrete steps. The chain is Porphobilinogen deaminase from Stenotrophomonas maltophilia (strain K279a).